The following is a 214-amino-acid chain: Large ribosomal subunit protein uL6m (214 aa).

A mitochondrion-targeting transit peptide spans 1–16 (MSFIQRRLLSQTLFLR).

It belongs to the universal ribosomal protein uL6 family. In terms of assembly, component of the mitochondrial large ribosomal subunit (mt-LSU). Mature yeast 74S mitochondrial ribosomes consist of a small (37S) and a large (54S) subunit. The 37S small subunit contains a 15S ribosomal RNA (15S mt-rRNA) and 34 different proteins. The 54S large subunit contains a 21S rRNA (21S mt-rRNA) and 46 different proteins.

It localises to the mitochondrion. Functionally, component of the mitochondrial ribosome (mitoribosome), a dedicated translation machinery responsible for the synthesis of mitochondrial genome-encoded proteins, including at least some of the essential transmembrane subunits of the mitochondrial respiratory chain. The mitoribosomes are attached to the mitochondrial inner membrane and translation products are cotranslationally integrated into the membrane. This is Large ribosomal subunit protein uL6m (MRPL6) from Saccharomyces cerevisiae (strain ATCC 204508 / S288c) (Baker's yeast).